The chain runs to 184 residues: Adenine phosphoribosyltransferase 2 (184 aa).

Belongs to the purine/pyrimidine phosphoribosyltransferase family. As to quaternary structure, homodimer.

It localises to the cytoplasm. The enzyme catalyses AMP + diphosphate = 5-phospho-alpha-D-ribose 1-diphosphate + adenine. It participates in purine metabolism; AMP biosynthesis via salvage pathway; AMP from adenine: step 1/1. Its function is as follows. Catalyzes a salvage reaction resulting in the formation of AMP, that is energically less costly than de novo synthesis. The polypeptide is Adenine phosphoribosyltransferase 2 (Rhizobium etli (strain ATCC 51251 / DSM 11541 / JCM 21823 / NBRC 15573 / CFN 42)).